The following is a 246-amino-acid chain: Phosphatidylserine decarboxylase proenzyme (246 aa).

Catalysis depends on S204, which acts as the Schiff-base intermediate with substrate; via pyruvic acid. Residue S204 is modified to Pyruvic acid (Ser); by autocatalysis.

This sequence belongs to the phosphatidylserine decarboxylase family. PSD-A subfamily. In terms of assembly, heterodimer of a large membrane-associated beta subunit and a small pyruvoyl-containing alpha subunit. It depends on pyruvate as a cofactor. Is synthesized initially as an inactive proenzyme. Formation of the active enzyme involves a self-maturation process in which the active site pyruvoyl group is generated from an internal serine residue via an autocatalytic post-translational modification. Two non-identical subunits are generated from the proenzyme in this reaction, and the pyruvate is formed at the N-terminus of the alpha chain, which is derived from the carboxyl end of the proenzyme. The post-translation cleavage follows an unusual pathway, termed non-hydrolytic serinolysis, in which the side chain hydroxyl group of the serine supplies its oxygen atom to form the C-terminus of the beta chain, while the remainder of the serine residue undergoes an oxidative deamination to produce ammonia and the pyruvoyl prosthetic group on the alpha chain.

The protein localises to the cell membrane. It catalyses the reaction a 1,2-diacyl-sn-glycero-3-phospho-L-serine + H(+) = a 1,2-diacyl-sn-glycero-3-phosphoethanolamine + CO2. The protein operates within phospholipid metabolism; phosphatidylethanolamine biosynthesis; phosphatidylethanolamine from CDP-diacylglycerol: step 2/2. Its function is as follows. Catalyzes the formation of phosphatidylethanolamine (PtdEtn) from phosphatidylserine (PtdSer). In Zymomonas mobilis subsp. mobilis (strain ATCC 31821 / ZM4 / CP4), this protein is Phosphatidylserine decarboxylase proenzyme.